We begin with the raw amino-acid sequence, 165 residues long: MSNQLKDLFERQKEASAGSKQEDNEEVLQFIGFIIGDEEYAIPILNILEIVKPIGYTRVPETPNYVLGVFNLRGNVFPLISLRLKFGLKAEKQNKDTRYLVVRHNDQIAGFFIDRLTEAIRIKQTDIDPVPETLSDNNNLTYGIGKQNDRLVTILRVEEILKKDF.

The protein belongs to the CheW family.

Functionally, plays an essential role in chemotaxis signal transduction system in order to colonize the host stomach. The chain is Chemotaxis protein CheW from Helicobacter pylori (strain ATCC 700392 / 26695) (Campylobacter pylori).